The chain runs to 325 residues: MENRLINPVERVDDSVDNNIRPSTLAEYIGQPVVREQMEVFIEAARRRNEALDHTLIFGPPGLGKTTLANIIAREMGGNLRSTSGPVLERAGDLAAMLTNLEEGDVLFIDEIHRLSPVIEEILYPAMEDFQLDIMIGEGPAARSIKLDLPPFTLVAATTRAGLLTSPLRDRFGIVQRLEFYNIEDLTTIVSRSARLMNVVMTPEGAVEVARRSRGTPRIANRLLRRVRDYAQVKSNGEVTGEIADSALDMLAVDRRGLDHLDRRYIEMVHARFDNGPAGVEAIAAAMAEDRGTLEDVIEPYLIQQGYVLRTARGRVLTQMAIDQL.

The large ATPase domain (RuvB-L) stretch occupies residues 1 to 181 (MENRLINPVE…FGIVQRLEFY (181 aa)). ATP-binding positions include Ile20, Arg21, Gly62, Lys65, Thr66, Thr67, 128 to 130 (EDF), Arg171, Tyr181, and Arg218. A Mg(2+)-binding site is contributed by Thr66. Residues 182-252 (NIEDLTTIVS…IADSALDMLA (71 aa)) form a small ATPAse domain (RuvB-S) region. A head domain (RuvB-H) region spans residues 255–325 (RRGLDHLDRR…VLTQMAIDQL (71 aa)). Residues Arg291, Arg310, and Arg315 each coordinate DNA.

Belongs to the RuvB family. Homohexamer. Forms an RuvA(8)-RuvB(12)-Holliday junction (HJ) complex. HJ DNA is sandwiched between 2 RuvA tetramers; dsDNA enters through RuvA and exits via RuvB. An RuvB hexamer assembles on each DNA strand where it exits the tetramer. Each RuvB hexamer is contacted by two RuvA subunits (via domain III) on 2 adjacent RuvB subunits; this complex drives branch migration. In the full resolvosome a probable DNA-RuvA(4)-RuvB(12)-RuvC(2) complex forms which resolves the HJ.

The protein localises to the cytoplasm. It catalyses the reaction ATP + H2O = ADP + phosphate + H(+). Functionally, the RuvA-RuvB-RuvC complex processes Holliday junction (HJ) DNA during genetic recombination and DNA repair, while the RuvA-RuvB complex plays an important role in the rescue of blocked DNA replication forks via replication fork reversal (RFR). RuvA specifically binds to HJ cruciform DNA, conferring on it an open structure. The RuvB hexamer acts as an ATP-dependent pump, pulling dsDNA into and through the RuvAB complex. RuvB forms 2 homohexamers on either side of HJ DNA bound by 1 or 2 RuvA tetramers; 4 subunits per hexamer contact DNA at a time. Coordinated motions by a converter formed by DNA-disengaged RuvB subunits stimulates ATP hydrolysis and nucleotide exchange. Immobilization of the converter enables RuvB to convert the ATP-contained energy into a lever motion, pulling 2 nucleotides of DNA out of the RuvA tetramer per ATP hydrolyzed, thus driving DNA branch migration. The RuvB motors rotate together with the DNA substrate, which together with the progressing nucleotide cycle form the mechanistic basis for DNA recombination by continuous HJ branch migration. Branch migration allows RuvC to scan DNA until it finds its consensus sequence, where it cleaves and resolves cruciform DNA. The sequence is that of Holliday junction branch migration complex subunit RuvB from Psychrobacter sp. (strain PRwf-1).